The chain runs to 118 residues: Putative membrane protein insertion efficiency factor (118 aa).

This sequence belongs to the UPF0161 family.

Its subcellular location is the cell inner membrane. Could be involved in insertion of integral membrane proteins into the membrane. The protein is Putative membrane protein insertion efficiency factor of Helicobacter pylori (strain P12).